Reading from the N-terminus, the 142-residue chain is Maximins y/Hw (142 aa).

Positions 1 to 18 are cleaved as a signal peptide; sequence MIFKYIVAVSFLIASGYA. The propeptide occupies 19–43; it reads RSVKNDEQSLSQREVLEEESLREIR. Phe-68 is subject to Phenylalanine amide. Residues 72–121 constitute a propeptide that is removed on maturation; that stretch reads TAEDHEVMKRLEAVIRDLDSLDHSEEASERETRGFNQEEIANLFTKKEKR. Ile-141 carries the post-translational modification Isoleucine amide.

This sequence belongs to the bombinin family. In terms of tissue distribution, expressed by the skin glands.

It localises to the secreted. Its function is as follows. Maximin-y shows antimicrobial activity against bacteria and against the fungus C.albicans. It has little hemolytic activity. Maximin-Hw shows antimicrobial activity against bacteria and against the fungus C.albicans. Shows strong hemolytic activity. The chain is Maximins y/Hw from Bombina maxima (Giant fire-bellied toad).